Reading from the N-terminus, the 426-residue chain is UDP-N-acetylglucosamine 1-carboxyvinyltransferase 2 (426 aa).

K22–N23 lines the phosphoenolpyruvate pocket. UDP-N-acetyl-alpha-D-glucosamine is bound at residue R92. Catalysis depends on D116, which acts as the Proton donor. UDP-N-acetyl-alpha-D-glucosamine is bound by residues R121–Q125, D307, and I329.

This sequence belongs to the EPSP synthase family. MurA subfamily.

It localises to the cytoplasm. The catalysed reaction is phosphoenolpyruvate + UDP-N-acetyl-alpha-D-glucosamine = UDP-N-acetyl-3-O-(1-carboxyvinyl)-alpha-D-glucosamine + phosphate. The protein operates within cell wall biogenesis; peptidoglycan biosynthesis. Its function is as follows. Cell wall formation. Adds enolpyruvyl to UDP-N-acetylglucosamine. The chain is UDP-N-acetylglucosamine 1-carboxyvinyltransferase 2 from Lactiplantibacillus plantarum (strain ATCC BAA-793 / NCIMB 8826 / WCFS1) (Lactobacillus plantarum).